The following is an 89-amino-acid chain: Putative defensin-like protein 40 (89 aa).

The first 26 residues, 1–26 (MAGIANGVGLLISFMLICGGMPKGHA), serve as a signal peptide directing secretion. Disulfide bonds link Cys33-Cys88, Cys46-Cys69, Cys55-Cys81, and Cys59-Cys83.

Belongs to the DEFL family.

It localises to the secreted. In Arabidopsis thaliana (Mouse-ear cress), this protein is Putative defensin-like protein 40.